The sequence spans 1011 residues: Liprin-beta-1 (1011 aa).

Residue S37 is modified to Phosphoserine. At T39 the chain carries Phosphothreonine. S40 carries the post-translational modification Phosphoserine. A coiled-coil region spans residues 156–405 (QQELLSRTSL…VPEEFHTTIL (250 aa)). Residue K322 is modified to N6-acetyllysine. Disordered regions lie at residues 420–439 (ETSE…EEND) and 463–634 (KSSS…RDLG). S434 and S466 each carry phosphoserine. A compositionally biased stretch (basic and acidic residues) spans 470-492 (LKKETSDGEKETIQKTSEDRAPA). Residue K471 forms a Glycyl lysine isopeptide (Lys-Gly) (interchain with G-Cter in SUMO2) linkage. S523 and S540 each carry phosphoserine. Positions 546 to 556 (ETEKETAEHLD) are enriched in basic and acidic residues. The residue at position 579 (S579) is a Phosphoserine. Residues 584-598 (KKSRGIMKLFGKLRR) are compositionally biased toward basic residues. S601 and S636 each carry phosphoserine. 2 SAM domains span residues 647–711 (WTKE…LGSE) and 719–782 (LDFN…LRIN). Phosphoserine is present on S794. Residues 804–876 (VQKWTNHRVM…ATHFNLLIGA (73 aa)) enclose the SAM 3 domain. S999, S1001, and S1003 each carry phosphoserine. T1005 carries the phosphothreonine modification.

The protein belongs to the liprin family. Liprin-beta subfamily. Forms homodimers and heterodimers. Interacts with S100A4 in a Ca(2+)-dependent mode. Part of a cortical microtubule stabilization complex (CMSC) composed of KANK1, PPFIA1, PPFIBP1, ERC1/ELKS, PHLDB2/LL5beta, CLASPs, KIF21A and possibly additional interactors; within CMSCs KANK1 and PHLDB2/LL5beta seem to be the core components for recruiting microtubule-binding proteins KIF21A and CLASPs, whereas PPFIA1, PPFIBP1 and ERC1/ELKS serve as scaffolds for protein clustering. Interacts with KANK1 (via CC1 domain, residues 244-339). As to expression, widely expressed. Absent in liver.

It localises to the cytoplasm. The protein resides in the cell cortex. May regulate the disassembly of focal adhesions. Did not bind receptor-like tyrosine phosphatases type 2A. This is Liprin-beta-1 (PPFIBP1) from Homo sapiens (Human).